The following is a 172-amino-acid chain: Putative phosphoesterase BC_1225 (172 aa).

Catalysis depends on histidine 34, which acts as the Proton donor. 2 short sequence motifs (HXTX) span residues 34–37 and 115–118; these read HITL and HLTI. The active-site Proton acceptor is histidine 115.

The protein belongs to the 2H phosphoesterase superfamily. YjcG family.

This chain is Putative phosphoesterase BC_1225, found in Bacillus cereus (strain ATCC 14579 / DSM 31 / CCUG 7414 / JCM 2152 / NBRC 15305 / NCIMB 9373 / NCTC 2599 / NRRL B-3711).